An 89-amino-acid polypeptide reads, in one-letter code: Transcriptional regulator WhiB2 (89 aa).

Residues 1–15 (MVPEAPAPFEEPLPP) are compositionally biased toward pro residues. The disordered stretch occupies residues 1–24 (MVPEAPAPFEEPLPPEATDQWQDR). The 4Fe-4S Wbl-type domain occupies 26–83 (LCAQTDPEAFFPEKGGSTREAKKICMGCEVRHECLEYALAHDERFGIWGGLSERERRR). Cys27 serves as a coordination point for [4Fe-4S] cluster. Phosphoserine is present on Ser42. [4Fe-4S] cluster contacts are provided by Cys50, Cys53, and Cys59.

Belongs to the WhiB family. Requires [4Fe-4S] cluster as cofactor. In terms of processing, may be phosphorylated, possibly on Ser-42. The cluster is degraded quickly in the presence of air. Upon cluster removal intramolecular disulfide bonds are formed. Post-translationally, the Fe-S cluster can be nitrosylated by nitric oxide (NO).

The protein resides in the cytoplasm. Functionally, acts as a transcriptional regulator. Probably redox-responsive. The apo- but not holo-form probably binds DNA. The apo-form functions as a chaperone, preventing aggregation or helping in correct refolding of a number of substrates; this activity does not require ATP or the ability to bind a Fe-S cluster. Chaperone activity is insensitive to the redox state of its cysteine residues. The apo-form has no protein disulfide reductase activity. The apo-form binds to its own promoter. The sequence is that of Transcriptional regulator WhiB2 (whiB2) from Mycobacterium tuberculosis (strain ATCC 25618 / H37Rv).